Consider the following 72-residue polypeptide: Translation initiation factor IF-1 (72 aa).

The 72-residue stretch at 1–72 (MSKTDVVEIE…TKGRIIWRDK (72 aa)) folds into the S1-like domain.

Belongs to the IF-1 family. As to quaternary structure, component of the 30S ribosomal translation pre-initiation complex which assembles on the 30S ribosome in the order IF-2 and IF-3, IF-1 and N-formylmethionyl-tRNA(fMet); mRNA recruitment can occur at any time during PIC assembly.

Its subcellular location is the cytoplasm. Functionally, one of the essential components for the initiation of protein synthesis. Stabilizes the binding of IF-2 and IF-3 on the 30S subunit to which N-formylmethionyl-tRNA(fMet) subsequently binds. Helps modulate mRNA selection, yielding the 30S pre-initiation complex (PIC). Upon addition of the 50S ribosomal subunit IF-1, IF-2 and IF-3 are released leaving the mature 70S translation initiation complex. The sequence is that of Translation initiation factor IF-1 from Lachnoclostridium phytofermentans (strain ATCC 700394 / DSM 18823 / ISDg) (Clostridium phytofermentans).